The primary structure comprises 181 residues: MALTISAQLDKFVSSYVEHAKGEGLKIAFDSEWPSPCYEETAKDGELVEWAPKRQSPPLSFNNVEDALSLKLHADYCCYFTTYYSDNLKAKAPQGDCELLQVFNREDFERLQQNLIGHLLMKQRLNQAPTLFFGLTDEEDFILTVINETGEVALEQVGQAPTQILANSLAEFIEQLSPLNA.

The protein belongs to the Syd family.

Its subcellular location is the cell inner membrane. Interacts with the SecY protein in vivo. May bind preferentially to an uncomplexed state of SecY, thus functioning either as a chelating agent for excess SecY in the cell or as a regulatory factor that negatively controls the translocase function. The protein is Protein Syd of Alteromonas mediterranea (strain DSM 17117 / CIP 110805 / LMG 28347 / Deep ecotype).